A 756-amino-acid polypeptide reads, in one-letter code: Polyribonucleotide nucleotidyltransferase (756 aa).

Mg(2+) is bound by residues aspartate 492 and aspartate 498. Residues 559 to 618 (PQHAEVFVNPDVIRIIIGPGGKNIKAITAATGASIDIEDSGKVSIFAPTYEAMEMAREMV) enclose the KH domain. The 75-residue stretch at 628–702 (GKNYVGKVRK…SRKAVLLEEQ (75 aa)) folds into the S1 motif domain. Positions 703 to 756 (GVEWNPEDTARPSGPPRDRGDRGDRGGRGDRGGDRRGGDRGGRGGDRGRGGDRR) are disordered. The segment covering 718-756 (PRDRGDRGDRGGRGDRGGDRRGGDRGGRGGDRGRGGDRR) has biased composition (basic and acidic residues).

The protein belongs to the polyribonucleotide nucleotidyltransferase family. Requires Mg(2+) as cofactor.

The protein resides in the cytoplasm. The catalysed reaction is RNA(n+1) + phosphate = RNA(n) + a ribonucleoside 5'-diphosphate. Functionally, involved in mRNA degradation. Catalyzes the phosphorolysis of single-stranded polyribonucleotides processively in the 3'- to 5'-direction. In Nitratidesulfovibrio vulgaris (strain DSM 19637 / Miyazaki F) (Desulfovibrio vulgaris), this protein is Polyribonucleotide nucleotidyltransferase.